Consider the following 185-residue polypeptide: Ribosome-recycling factor (185 aa).

It belongs to the RRF family.

Its subcellular location is the cytoplasm. Its function is as follows. Responsible for the release of ribosomes from messenger RNA at the termination of protein biosynthesis. May increase the efficiency of translation by recycling ribosomes from one round of translation to another. This is Ribosome-recycling factor from Yersinia enterocolitica serotype O:8 / biotype 1B (strain NCTC 13174 / 8081).